We begin with the raw amino-acid sequence, 335 residues long: N-acetyl-gamma-glutamyl-phosphate reductase (335 aa).

Cys156 is an active-site residue.

This sequence belongs to the NAGSA dehydrogenase family. Type 1 subfamily.

The protein resides in the cytoplasm. The enzyme catalyses N-acetyl-L-glutamate 5-semialdehyde + phosphate + NADP(+) = N-acetyl-L-glutamyl 5-phosphate + NADPH + H(+). The protein operates within amino-acid biosynthesis; L-arginine biosynthesis; N(2)-acetyl-L-ornithine from L-glutamate: step 3/4. Functionally, catalyzes the NADPH-dependent reduction of N-acetyl-5-glutamyl phosphate to yield N-acetyl-L-glutamate 5-semialdehyde. This chain is N-acetyl-gamma-glutamyl-phosphate reductase, found in Aeromonas salmonicida (strain A449).